The following is a 224-amino-acid chain: Endonuclease NucS (224 aa).

Belongs to the NucS endonuclease family.

The protein localises to the cytoplasm. Cleaves both 3' and 5' ssDNA extremities of branched DNA structures. In Rhodococcus jostii (strain RHA1), this protein is Endonuclease NucS.